We begin with the raw amino-acid sequence, 297 residues long: Homoserine kinase (297 aa).

82–92 (PLTRGLGSSAS) serves as a coordination point for ATP.

It belongs to the GHMP kinase family. Homoserine kinase subfamily.

The protein localises to the cytoplasm. The catalysed reaction is L-homoserine + ATP = O-phospho-L-homoserine + ADP + H(+). It functions in the pathway amino-acid biosynthesis; L-threonine biosynthesis; L-threonine from L-aspartate: step 4/5. Its function is as follows. Catalyzes the ATP-dependent phosphorylation of L-homoserine to L-homoserine phosphate. This is Homoserine kinase from Bacillus mycoides (strain KBAB4) (Bacillus weihenstephanensis).